We begin with the raw amino-acid sequence, 463 residues long: MSVLIVGMSHRSAPVSLLERLSMDDSVRGETTQALLGRASLSEALIVSTCNRLEVYTVTSSFHTGVNDVVEVLHEASGVDIETLRGYLYVRYADAAAEHMLVVTSGLDSMVLGEQQIIGQVRTAYQAANEYGSVGPALHSLTQTALHTGKRVHSETAIDDAGASMVSFAVDRALVQMGLDSEAEAPLSGKTALVLGAGAMSSLAATHLGRAGISNLIMANRTLERAERLAEHSLEAGVPAEVVEYDQRASAYNRVDLVVSATGADDFTVKPEDIPEGASLMLVDLSMPRDIDDACADLPGVDLVNIERLHKASREGGSGMAPSEEEALAIVREELDSFTSEQRIRDIVPAVSALRRQAASVGSDELDRLRQRAPGISEVEWGEVEKTVRRVVDKLLHEPTVRVKELAARSGSISYDSALQELFGLESLASTAAPATTSVNASELPDAGIVAFVNAPSATQTRE.

Substrate contacts are provided by residues 49 to 52 (TCNR), S109, 114 to 116 (EQQ), and Q120. The active-site Nucleophile is C50. NADP(+) is bound at residue 196–201 (GAGAMS).

This sequence belongs to the glutamyl-tRNA reductase family. Homodimer.

The catalysed reaction is (S)-4-amino-5-oxopentanoate + tRNA(Glu) + NADP(+) = L-glutamyl-tRNA(Glu) + NADPH + H(+). The protein operates within porphyrin-containing compound metabolism; protoporphyrin-IX biosynthesis; 5-aminolevulinate from L-glutamyl-tRNA(Glu): step 1/2. Functionally, catalyzes the NADPH-dependent reduction of glutamyl-tRNA(Glu) to glutamate 1-semialdehyde (GSA). This is Glutamyl-tRNA reductase from Corynebacterium glutamicum (strain ATCC 13032 / DSM 20300 / JCM 1318 / BCRC 11384 / CCUG 27702 / LMG 3730 / NBRC 12168 / NCIMB 10025 / NRRL B-2784 / 534).